The sequence spans 1118 residues: Receptor-type guanylate cyclase gcy-2 (1118 aa).

The first 21 residues, 1–21 (MVSSILKFVILIHSTFHSTFA), serve as a signal peptide directing secretion. Topologically, residues 22-494 (QNLPDTTVAP…FCPISFWEQY (473 aa)) are extracellular. Asparagine 222, asparagine 351, asparagine 361, asparagine 387, asparagine 420, and asparagine 452 each carry an N-linked (GlcNAc...) asparagine glycan. The chain crosses the membrane as a helical span at residues 495–515 (MILAIVSISVIVLMVIIMIIG). Over 516–1118 (CLCVISAKHA…FKMDTLKVAN (603 aa)) the chain is Cytoplasmic. Residues 558–875 (LQSAPSISTG…EGFDSVTVFF (318 aa)) form the Protein kinase domain. The Guanylate cyclase domain occupies 872 to 1002 (TVFFSDVVKF…DTVNTASRME (131 aa)). The disordered stretch occupies residues 1076-1103 (WITPPAPKPEIRSVSSHGSRPPSVYDPL).

This sequence belongs to the adenylyl cyclase class-4/guanylyl cyclase family. In terms of tissue distribution, expressed bilaterally in AWA and ASI sensory neurons and in RIA and PVT interneurons.

The protein localises to the cell membrane. It carries out the reaction GTP = 3',5'-cyclic GMP + diphosphate. Its function is as follows. Guanylate cyclase involved in the production of the second messenger cGMP. The chain is Receptor-type guanylate cyclase gcy-2 from Caenorhabditis elegans.